Consider the following 429-residue polypeptide: Argininosuccinate lyase (429 aa).

It belongs to the lyase 1 family. Argininosuccinate lyase subfamily.

Its subcellular location is the cytoplasm. The catalysed reaction is 2-(N(omega)-L-arginino)succinate = fumarate + L-arginine. Its pathway is amino-acid biosynthesis; L-arginine biosynthesis; L-arginine from L-ornithine and carbamoyl phosphate: step 3/3. The sequence is that of Argininosuccinate lyase from Pyrobaculum islandicum (strain DSM 4184 / JCM 9189 / GEO3).